The primary structure comprises 831 residues: Phenylalanine--tRNA ligase beta subunit (831 aa).

Residues 44-155 (GPVDGPVTVG…GAAEPGADGA (112 aa)) enclose the tRNA-binding domain. Residues 414-489 (WSPPPIRMGV…RLEGLEVIPS (76 aa)) form the B5 domain. Mg(2+)-binding residues include Asp-467, Asp-473, Glu-476, and Glu-477. Residues 737–830 (SPYPAVFQDV…AAERVGAVLR (94 aa)) form the FDX-ACB domain.

It belongs to the phenylalanyl-tRNA synthetase beta subunit family. Type 1 subfamily. Tetramer of two alpha and two beta subunits. It depends on Mg(2+) as a cofactor.

The protein resides in the cytoplasm. It carries out the reaction tRNA(Phe) + L-phenylalanine + ATP = L-phenylalanyl-tRNA(Phe) + AMP + diphosphate + H(+). The sequence is that of Phenylalanine--tRNA ligase beta subunit (pheT) from Mycobacterium tuberculosis (strain ATCC 25618 / H37Rv).